A 75-amino-acid polypeptide reads, in one-letter code: UPF0057 membrane protein At2g24040 (75 aa).

Helical transmembrane passes span S4–L24 and F33–Y53.

Belongs to the UPF0057 (PMP3) family.

It is found in the membrane. In Arabidopsis thaliana (Mouse-ear cress), this protein is UPF0057 membrane protein At2g24040.